The following is a 335-amino-acid chain: Glyceraldehyde-3-phosphate dehydrogenase 2 (335 aa).

NAD(+) contacts are provided by residues arginine 13–isoleucine 14, aspartate 34, and methionine 79. D-glyceraldehyde 3-phosphate contacts are provided by residues serine 151–threonine 153, threonine 182, threonine 211–glycine 212, and arginine 234. The Nucleophile role is filled by cysteine 152. NAD(+) is bound at residue asparagine 316.

The protein belongs to the glyceraldehyde-3-phosphate dehydrogenase family. As to quaternary structure, homotetramer.

It is found in the cytoplasm. The enzyme catalyses D-glyceraldehyde 3-phosphate + phosphate + NAD(+) = (2R)-3-phospho-glyceroyl phosphate + NADH + H(+). Its pathway is carbohydrate degradation; glycolysis; pyruvate from D-glyceraldehyde 3-phosphate: step 1/5. Functionally, glyceraldehyde-3-phosphate dehydrogenase is a key enzyme in glycolysis that catalyzes the first step of the pathway by converting D-glyceraldehyde 3-phosphate (G3P) into 3-phospho-D-glyceroyl phosphate. The chain is Glyceraldehyde-3-phosphate dehydrogenase 2 (gapdh-2) from Danio rerio (Zebrafish).